Here is a 353-residue protein sequence, read N- to C-terminus: Peptide-N(4)-(N-acetyl-beta-glucosaminyl)asparagine amidase (353 aa).

Zn(2+) contacts are provided by Cys-125, Cys-128, and Cys-159. Cys-185 acts as the Nucleophile in catalysis. Catalysis depends on residues His-212 and Asp-229. Residue Glu-232 participates in substrate binding. A disordered region spans residues 316–353 (SLEKTKPSKDTSTTTLTGTKGRESGSTAWKQQRGEDGS). Positions 325-334 (DTSTTTLTGT) are enriched in low complexity.

The protein belongs to the transglutaminase-like superfamily. PNGase family. Zn(2+) is required as a cofactor.

The protein resides in the cytoplasm. It catalyses the reaction Hydrolysis of an N(4)-(acetyl-beta-D-glucosaminyl)asparagine residue in which the glucosamine residue may be further glycosylated, to yield a (substituted) N-acetyl-beta-D-glucosaminylamine and a peptide containing an aspartate residue.. Functionally, specifically deglycosylates the denatured form of N-linked glycoproteins in the cytoplasm and assists their proteasome-mediated degradation. Cleaves the beta-aspartyl-glucosamine (GlcNAc) of the glycan and the amide side chain of Asn, converting Asn to Asp. Prefers proteins containing high-mannose over those bearing complex type oligosaccharides. Can recognize misfolded proteins in the endoplasmic reticulum that are exported to the cytosol to be destroyed and deglycosylate them, while it has no activity toward native proteins. Deglycosylation is a prerequisite for subsequent proteasome-mediated degradation of some, but not all, misfolded glycoproteins. In Kluyveromyces lactis (strain ATCC 8585 / CBS 2359 / DSM 70799 / NBRC 1267 / NRRL Y-1140 / WM37) (Yeast), this protein is Peptide-N(4)-(N-acetyl-beta-glucosaminyl)asparagine amidase (PNG1).